The primary structure comprises 427 residues: Cyclin-L1-1 (427 aa).

The segment at 258–427 (HRRTSDTNAS…SRDKDRHRRQ (170 aa)) is disordered. Residues 263-276 (DTNASKESPATTVA) show a composition bias toward polar residues. 4 stretches are compositionally biased toward basic and acidic residues: residues 289-311 (QEKDALIKAGSDKVKEKGDDDGK), 328-382 (KSEK…DRDR), 390-400 (DRSSGYSDKEK), and 407-421 (RDRGDHYSSHSSRDK).

This sequence belongs to the cyclin family. Cyclin L subfamily.

This chain is Cyclin-L1-1 (CYCL1-1), found in Oryza sativa subsp. japonica (Rice).